The following is a 614-amino-acid chain: DNA mismatch repair protein MutL (614 aa).

The protein belongs to the DNA mismatch repair MutL/HexB family.

In terms of biological role, this protein is involved in the repair of mismatches in DNA. It is required for dam-dependent methyl-directed DNA mismatch repair. May act as a 'molecular matchmaker', a protein that promotes the formation of a stable complex between two or more DNA-binding proteins in an ATP-dependent manner without itself being part of a final effector complex. The chain is DNA mismatch repair protein MutL from Leptospira biflexa serovar Patoc (strain Patoc 1 / ATCC 23582 / Paris).